The chain runs to 106 residues: Glutaredoxin-1 (106 aa).

Residue Ala-2 is modified to N-acetylalanine. The Glutaredoxin domain occupies 3 to 106 (QAFVNSKIQP…TRLQQIGALK (104 aa)). An N6-succinyllysine modification is found at Lys-9. 2 disulfides stabilise this stretch: Cys-23–Cys-26 and Cys-79–Cys-83.

This sequence belongs to the glutaredoxin family.

Its subcellular location is the cytoplasm. Has a glutathione-disulfide oxidoreductase activity in the presence of NADPH and glutathione reductase. Reduces low molecular weight disulfides and proteins. This chain is Glutaredoxin-1 (GLRX), found in Sus scrofa (Pig).